A 191-amino-acid chain; its full sequence is Calcium-binding protein CML42 (191 aa).

EF-hand domains are found at residues 25–60 (LNAL…LGLN), 116–151 (ENES…LGLP), and 154–189 (GEME…VVIP). Ca(2+) is bound by residues D38, N40, D42, E49, D129, N131, D133, E140, D167, N169, D171, R173, and E178.

As to quaternary structure, interacts with KIC. Expressed in seedling shoots, roots, rosette leaves and flowers. Expressed in the leaf trichome support cells.

Probable calcium sensor that binds calcium in vitro. Involved in the regulation of trichome branching. The polypeptide is Calcium-binding protein CML42 (CML42) (Arabidopsis thaliana (Mouse-ear cress)).